We begin with the raw amino-acid sequence, 135 residues long: Hydroxylaminobenzene mutase HabA (135 aa).

Transmembrane regions (helical) follow at residues 5 to 25, 33 to 55, 67 to 87, and 113 to 133; these read LFAS…LVPV, VAGH…LWPY, FWLL…AALW, and FLLF…LIGI.

The protein resides in the cell membrane. The enzyme catalyses N-phenylhydroxylamine = 2-aminophenol. Catalyzes the rearrangement of hydroxylaminobenzene to 2-aminophenol. Involved in the degradation of nitrobenzene. The protein is Hydroxylaminobenzene mutase HabA (habA) of Ectopseudomonas oleovorans (Pseudomonas oleovorans).